The following is a 181-amino-acid chain: ATP synthase subunit delta (181 aa).

Belongs to the ATPase delta chain family. As to quaternary structure, F-type ATPases have 2 components, F(1) - the catalytic core - and F(0) - the membrane proton channel. F(1) has five subunits: alpha(3), beta(3), gamma(1), delta(1), epsilon(1). F(0) has three main subunits: a(1), b(2) and c(10-14). The alpha and beta chains form an alternating ring which encloses part of the gamma chain. F(1) is attached to F(0) by a central stalk formed by the gamma and epsilon chains, while a peripheral stalk is formed by the delta and b chains.

The protein localises to the cell inner membrane. In terms of biological role, f(1)F(0) ATP synthase produces ATP from ADP in the presence of a proton or sodium gradient. F-type ATPases consist of two structural domains, F(1) containing the extramembraneous catalytic core and F(0) containing the membrane proton channel, linked together by a central stalk and a peripheral stalk. During catalysis, ATP synthesis in the catalytic domain of F(1) is coupled via a rotary mechanism of the central stalk subunits to proton translocation. This protein is part of the stalk that links CF(0) to CF(1). It either transmits conformational changes from CF(0) to CF(1) or is implicated in proton conduction. The protein is ATP synthase subunit delta of Blochmanniella pennsylvanica (strain BPEN).